A 370-amino-acid chain; its full sequence is Chaperone protein DnaJ (370 aa).

The J domain maps to 6 to 70; the sequence is DFYEILGVSK…QKRANYDQFG (65 aa). The segment at 134-216 adopts a CR-type zinc-finger fold; it reads GANKSVTLNV…CHGKGFNTKR (83 aa). Zn(2+)-binding residues include C147, C150, C164, C167, C190, C193, C204, and C207. CXXCXGXG motif repeat units lie at residues 147–154, 164–171, 190–197, and 204–211; these read CTSCHGSG, CSRCGGTG, CPDCGGSG, and CGECHGKG.

Belongs to the DnaJ family. Homodimer. Requires Zn(2+) as cofactor.

The protein localises to the cytoplasm. Its function is as follows. Participates actively in the response to hyperosmotic and heat shock by preventing the aggregation of stress-denatured proteins and by disaggregating proteins, also in an autonomous, DnaK-independent fashion. Unfolded proteins bind initially to DnaJ; upon interaction with the DnaJ-bound protein, DnaK hydrolyzes its bound ATP, resulting in the formation of a stable complex. GrpE releases ADP from DnaK; ATP binding to DnaK triggers the release of the substrate protein, thus completing the reaction cycle. Several rounds of ATP-dependent interactions between DnaJ, DnaK and GrpE are required for fully efficient folding. Also involved, together with DnaK and GrpE, in the DNA replication of plasmids through activation of initiation proteins. The protein is Chaperone protein DnaJ of Erysipelothrix rhusiopathiae.